The chain runs to 471 residues: FAD-dependent monooxygenase andE (471 aa).

FAD contacts are provided by glutamate 35, glycine 49, and arginine 108. Tyrosine 216 is a catalytic residue. FAD is bound by residues aspartate 308 and alanine 321. Transmembrane regions (helical) follow at residues leucine 403–proline 423 and threonine 443–leucine 463.

The protein belongs to the paxM FAD-dependent monooxygenase family. FAD serves as cofactor.

Its subcellular location is the membrane. Its pathway is secondary metabolite biosynthesis; terpenoid biosynthesis. Its function is as follows. FAD-dependent monooxygenase; part of the gene cluster that mediates the biosynthesis of anditomin, a fungal meroterpenoid. The first step of the pathway is the synthesis of 3,5-dimethylorsellinic acid (DMOA) by the polyketide synthase andM. DMOA is then converted to the phthalide compound 5,7-dihydroxy-4,6-dimethylphthalide (DHDMP) by the cytochrome P450 monooxygenase andK, which is further prenylated by the prenyltransferase andD to yield farnesyl-DHDMP. Further epoxidation by the FAD-dependent monooxygenase andE leads to epoxyfarnesyl-DHDMP. The next step involves the terpene cyclase andB that converts epoxyfarnesyl-DHDMP into preandiloid A through opening of the epoxide ring followed by the cyclization of the farnesyl moiety. Preandiloid A is in turn oxidized at the C-3 hydroxyl group to yield preandiloid B by the dehydrogenase andC. The dioxygenase andA is solely responsible for the dehydrogenation of preandiloid B leading to the enone preandiloid C, as well as for the intriguing structural rearrangement to generate the bicyclo[2.2.2]octane core, transforming preandiloid C into andiconin. FAD-binding monooxygenase andJ then produces andilesin D which is reduced by dehydrogenase andI to yield andilesin A. Action of acetyltransferase andG followed by a spontaneous acetate elimination leads then to andilesin B, which is in turn substrate of the short chain dehydrogenase andH to yield andilesin C. Finally, the dioxygenase andF catalyzes the transformation of andilesin C to anditomin. The polypeptide is FAD-dependent monooxygenase andE (Emericella variicolor (Aspergillus stellatus)).